Consider the following 259-residue polypeptide: Glucose-1-phosphate thymidylyltransferase (259 aa).

This sequence belongs to the inositol monophosphatase superfamily.

It carries out the reaction dTTP + alpha-D-glucose 1-phosphate + H(+) = dTDP-alpha-D-glucose + diphosphate. It functions in the pathway antibiotic biosynthesis; streptomycin biosynthesis. This chain is Glucose-1-phosphate thymidylyltransferase (strO), found in Streptomyces griseus.